Here is a 137-residue protein sequence, read N- to C-terminus: Phosphoribosyl-AMP cyclohydrolase (137 aa).

Asp-84 serves as a coordination point for Mg(2+). Zn(2+) is bound at residue Cys-85. The Mg(2+) site is built by Asp-86 and Asp-88. Residues Cys-101 and Cys-108 each contribute to the Zn(2+) site.

The protein belongs to the PRA-CH family. In terms of assembly, homodimer. Mg(2+) serves as cofactor. Zn(2+) is required as a cofactor.

It is found in the cytoplasm. The enzyme catalyses 1-(5-phospho-beta-D-ribosyl)-5'-AMP + H2O = 1-(5-phospho-beta-D-ribosyl)-5-[(5-phospho-beta-D-ribosylamino)methylideneamino]imidazole-4-carboxamide. Its pathway is amino-acid biosynthesis; L-histidine biosynthesis; L-histidine from 5-phospho-alpha-D-ribose 1-diphosphate: step 3/9. Catalyzes the hydrolysis of the adenine ring of phosphoribosyl-AMP. This is Phosphoribosyl-AMP cyclohydrolase from Chlorobium phaeobacteroides (strain DSM 266 / SMG 266 / 2430).